The following is a 192-amino-acid chain: Ion-translocating oxidoreductase complex subunit B (192 aa).

A hydrophobic region spans residues 1–26 (MNAIWIAVAAVSLLGLAFGAILGYAS). Residues 32-91 (EDDPVVEKIDEILPQSQCGQCGYPGCRPYAEAISCNGEKINRCAPGGEAVMLKIAELLNV) form the 4Fe-4S domain. Residues Cys49, Cys52, Cys57, Cys74, Cys117, Cys120, Cys123, Cys127, Cys147, Cys150, Cys153, and Cys157 each coordinate [4Fe-4S] cluster. 4Fe-4S ferredoxin-type domains are found at residues 108–137 (MVAVIDENNCIGCTKCIQACPVDAIVGATR) and 138–167 (AMHTVMSDLCTGCNLCVDPCPTHCISLQPV).

This sequence belongs to the 4Fe4S bacterial-type ferredoxin family. RnfB subfamily. The complex is composed of six subunits: RsxA, RsxB, RsxC, RsxD, RsxE and RsxG. [4Fe-4S] cluster serves as cofactor.

The protein localises to the cell inner membrane. Part of a membrane-bound complex that couples electron transfer with translocation of ions across the membrane. Required to maintain the reduced state of SoxR. The chain is Ion-translocating oxidoreductase complex subunit B from Shigella dysenteriae serotype 1 (strain Sd197).